A 110-amino-acid chain; its full sequence is MEARAVGKYIRISPQKARLVADVVRGMGVDQAITTLRFMPKKGAVILQKVIESALANATQDDQADVDNLYVKVITIDGGPSLKRIRPRAMGRATGIIKRTSHITVVLDEN.

It belongs to the universal ribosomal protein uL22 family. In terms of assembly, part of the 50S ribosomal subunit.

This protein binds specifically to 23S rRNA; its binding is stimulated by other ribosomal proteins, e.g. L4, L17, and L20. It is important during the early stages of 50S assembly. It makes multiple contacts with different domains of the 23S rRNA in the assembled 50S subunit and ribosome. Its function is as follows. The globular domain of the protein is located near the polypeptide exit tunnel on the outside of the subunit, while an extended beta-hairpin is found that lines the wall of the exit tunnel in the center of the 70S ribosome. The chain is Large ribosomal subunit protein uL22 from Desulfotalea psychrophila (strain LSv54 / DSM 12343).